A 60-amino-acid chain; its full sequence is uncharacterized protein (60 aa).

This is an uncharacterized protein from Escherichia coli O157:H7.